The sequence spans 335 residues: Cytoskeleton protein RodZ (335 aa).

Topologically, residues 1–111 (MNTEATHDQN…LGKRRKKRDG (111 aa)) are cytoplasmic. An HTH cro/C1-type domain is found at 19-71 (LRNAREQLGLSQQAVAERLCLKVSTVRDIEEDKAPADLASTFLRGYIRSYARL). The H-T-H motif DNA-binding region spans 30–49 (QQAVAERLCLKVSTVRDIEE). Residues 112–132 (WLMTFTWLVLFVVIGLSGAWW) traverse the membrane as a helical; Signal-anchor for type II membrane protein segment. At 133–335 (WQDHKAQQEE…TLNAEQSPAQ (203 aa)) the chain is on the periplasmic side. Polar residues predominate over residues 148–164 (DQSSAELNNNQSQSVPL). Residues 148–244 (DQSSAELNNN…PLPTDQAGVT (97 aa)) are disordered. Low complexity-rich tracts occupy residues 165 to 205 (DTST…DPQQ) and 217 to 239 (DTAATPAPAATTTPDGAAPLPTD).

Belongs to the RodZ family.

Its subcellular location is the cell inner membrane. Cytoskeletal protein that is involved in cell-shape control through regulation of the length of the long axis. The sequence is that of Cytoskeleton protein RodZ from Escherichia coli O127:H6 (strain E2348/69 / EPEC).